We begin with the raw amino-acid sequence, 456 residues long: F-box/FBD/LRR-repeat protein At3g52680 (456 aa).

Positions 20 to 73 (KDRISELPDGLLLKILSSLPTNIVVATSVLSKQWRSLWKLVPNLEFDSDDYESE) constitute an F-box domain. 7 LRR repeats span residues 74–100 (HYTFSEIVCKSFLSHKAPVLESFRLKF), 102–127 (NFNPVDIGLWVGIAFSRHLRELVLDF), 152–179 (TLKLVLCILVDIPSPVLMKSLRTLHLEF), 180–205 (VRYKDESSVRNLLSGCPGLEELRLYR), 225–252 (TIHDNNDGPEFWGYVINAPFLKYLLIEE), 270–295 (IAEVTSITIEKFLGSFTSVSRLLLNL), and 318–344 (TREAEWWNLLTLMLENSPKLQVLKLTD). Positions 358 to 409 (KWNEPKDVPECLLSQLETFVWRRFDWGREEEKEIATYILKNGRRLKKATFST) constitute an FBD domain.

The protein is F-box/FBD/LRR-repeat protein At3g52680 of Arabidopsis thaliana (Mouse-ear cress).